Reading from the N-terminus, the 118-residue chain is Mu-like prophage FluMu tail tube protein (118 aa).

Residues 12-32 (RLNGKEWPSDNDGTLTPGGKE) are disordered.

To phage Mu protein M.

This Haemophilus influenzae (strain ATCC 51907 / DSM 11121 / KW20 / Rd) protein is Mu-like prophage FluMu tail tube protein.